We begin with the raw amino-acid sequence, 155 residues long: Ribosomal RNA large subunit methyltransferase H (155 aa).

Residues Leu-72, Gly-103, and 122 to 127 (LSALTL) contribute to the S-adenosyl-L-methionine site.

It belongs to the RNA methyltransferase RlmH family. In terms of assembly, homodimer.

It localises to the cytoplasm. The catalysed reaction is pseudouridine(1915) in 23S rRNA + S-adenosyl-L-methionine = N(3)-methylpseudouridine(1915) in 23S rRNA + S-adenosyl-L-homocysteine + H(+). In terms of biological role, specifically methylates the pseudouridine at position 1915 (m3Psi1915) in 23S rRNA. This Citrobacter koseri (strain ATCC BAA-895 / CDC 4225-83 / SGSC4696) protein is Ribosomal RNA large subunit methyltransferase H.